Reading from the N-terminus, the 209-residue chain is Imidazoleglycerol-phosphate dehydratase (209 aa).

It belongs to the imidazoleglycerol-phosphate dehydratase family.

The protein resides in the cytoplasm. It catalyses the reaction D-erythro-1-(imidazol-4-yl)glycerol 3-phosphate = 3-(imidazol-4-yl)-2-oxopropyl phosphate + H2O. It functions in the pathway amino-acid biosynthesis; L-histidine biosynthesis; L-histidine from 5-phospho-alpha-D-ribose 1-diphosphate: step 6/9. This Paracidovorax citrulli (strain AAC00-1) (Acidovorax citrulli) protein is Imidazoleglycerol-phosphate dehydratase.